The sequence spans 124 residues: Large ribosomal subunit protein bL12 (124 aa).

The protein belongs to the bacterial ribosomal protein bL12 family. In terms of assembly, homodimer. Part of the ribosomal stalk of the 50S ribosomal subunit. Forms a multimeric L10(L12)X complex, where L10 forms an elongated spine to which 2 to 4 L12 dimers bind in a sequential fashion. Binds GTP-bound translation factors.

Its function is as follows. Forms part of the ribosomal stalk which helps the ribosome interact with GTP-bound translation factors. Is thus essential for accurate translation. In Xanthobacter autotrophicus (strain ATCC BAA-1158 / Py2), this protein is Large ribosomal subunit protein bL12.